Here is a 357-residue protein sequence, read N- to C-terminus: Mating-type protein MAT-1 (357 aa).

A DNA-binding region (alpha box) is located at residues 53–108 (RAKRPLNAFMAFRTYYLKLFPDTQQKNASGFLTQLWGGDPHRNKWALIAKVYSFLR).

Belongs to the MATALPHA1 family.

It is found in the nucleus. Its function is as follows. Mating type proteins are sequence specific DNA-binding proteins that act as master switches in fungal differentiation by controlling gene expression in a cell type-specific fashion. Transcriptional activator that induces the transcription of alpha-specific genes. The chain is Mating-type protein MAT-1 (MAT1) from Fusarium oxysporum (Fusarium vascular wilt).